The sequence spans 333 residues: L-lactate dehydrogenase A chain (333 aa).

NAD(+)-binding positions include glycine 30–lysine 58 and arginine 100. Substrate is bound by residues arginine 107, asparagine 139, and arginine 170. Asparagine 139 is an NAD(+) binding site. Residue histidine 194 is the Proton acceptor of the active site. Threonine 249 lines the substrate pocket.

This sequence belongs to the LDH/MDH superfamily. LDH family. As to quaternary structure, homotetramer.

Its subcellular location is the cytoplasm. The enzyme catalyses (S)-lactate + NAD(+) = pyruvate + NADH + H(+). The protein operates within fermentation; pyruvate fermentation to lactate; (S)-lactate from pyruvate: step 1/1. This Cyprinus carpio (Common carp) protein is L-lactate dehydrogenase A chain (ldha).